Here is a 185-residue protein sequence, read N- to C-terminus: Large ribosomal subunit protein uL22 (185 aa).

Residues 157–185 (VAAPSPEEDAPKKKQSKKKMARQKLMQRD) form a disordered region. The segment covering 169 to 178 (KKQSKKKMAR) has biased composition (basic residues).

Belongs to the universal ribosomal protein uL22 family.

The polypeptide is Large ribosomal subunit protein uL22 (RpL17) (Ixodes scapularis (Black-legged tick)).